A 157-amino-acid chain; its full sequence is SsrA-binding protein (157 aa).

Belongs to the SmpB family.

The protein localises to the cytoplasm. Functionally, required for rescue of stalled ribosomes mediated by trans-translation. Binds to transfer-messenger RNA (tmRNA), required for stable association of tmRNA with ribosomes. tmRNA and SmpB together mimic tRNA shape, replacing the anticodon stem-loop with SmpB. tmRNA is encoded by the ssrA gene; the 2 termini fold to resemble tRNA(Ala) and it encodes a 'tag peptide', a short internal open reading frame. During trans-translation Ala-aminoacylated tmRNA acts like a tRNA, entering the A-site of stalled ribosomes, displacing the stalled mRNA. The ribosome then switches to translate the ORF on the tmRNA; the nascent peptide is terminated with the 'tag peptide' encoded by the tmRNA and targeted for degradation. The ribosome is freed to recommence translation, which seems to be the essential function of trans-translation. This Chromohalobacter salexigens (strain ATCC BAA-138 / DSM 3043 / CIP 106854 / NCIMB 13768 / 1H11) protein is SsrA-binding protein.